A 420-amino-acid chain; its full sequence is O-methyltransferase opaF (420 aa).

Residues 262 to 263 (GG), Asp-287, and 308 to 309 (DL) each bind S-adenosyl-L-methionine. The Proton acceptor role is filled by His-328.

This sequence belongs to the class I-like SAM-binding methyltransferase superfamily. Cation-independent O-methyltransferase family.

It functions in the pathway secondary metabolite biosynthesis. Functionally, O-methyltransferase; part of the gene cluster that mediates the biosynthesis of oxepinamides, derivatives of anthranilyl-containing tripeptides that share an oxepin ring and a fused pyrimidinone moiety. The nonribosomal peptide synthetase (NRPS) opaA assembles the quinazolinone core with D-Phe incorporation. The first adenylation domain (A1) of opaA loads and activates anthranilic acid whereas the second A domain (A2) is for activating of L-Phe, which is then converted to D-form by the E domain. The third A domain (A3) is responsible for L-Ile activation and the terminal condensation domain C3 for cyclization and releasing the NRPS product protuboxepin K. The cytochrome P450 monooxygenase opaB then catalyzes alone the oxepin ring formation to convert protuboxepin K into protuboxepin A. The flavoenzyme opaC installs subsequently one hydroxyl group at the oxepin ring, accompanied by double bond migration, to form 15-epi-oxepinamide E. The epimerase opaE changes the D-Phe residue back to L-form, leading to oxepinamide E, which is further methylated at the hydroxyl group at C-12 by the O-methyltransferase OpaF to yield oxepinamide F. The protein is O-methyltransferase opaF of Aspergillus ustus.